Consider the following 485-residue polypeptide: MATAPGERLQEEARCSVCLDFLQEPISVDCGHSFCLRCISEFCEKSDSAQGVYACPQCRGPFRPASFRPNRQLASLVDSVRQLGLGTGHAGSRQCARHGEDLSHFCEEDQTMLCWVCDTSPEHRSHRTETLQEAASRYQRMLRASLELVKKEMEEALTQEANVGKKTIIWKEKVEMQRQRFRLEFEKHRGFLAQEEQLQLRRLEEEERATLQRLRDSRNRLAQQNKALKELAEELEERSQRPAPGLLEGARGVLTRCEAITRLEPEAVPMDLKTVCRIPGMREMLRKFQVDVKLDPATAHPSLLLTADLRSVQDAEVWRDVPSNPERFDTWPCILGLQGFSSGRHYWEVIVGERAEWGLGVCRDSVLRKGETTPSPENGVWAMWLLRGNEYMVLSSPSVPVLQDERPRRIGIFLDYEAGEISFYNVTNGSYIYTFNHLFSGVLRPYFFVCDTTPLILPPMTEAAPGNWTPRGIFDLAAAARNEEY.

Residues 15–59 form an RING-type zinc finger; it reads CSVCLDFLQEPISVDCGHSFCLRCISEFCEKSDSAQGVYACPQCR. The B box-type zinc finger occupies 90–131; sequence AGSRQCARHGEDLSHFCEEDQTMLCWVCDTSPEHRSHRTETL. Zn(2+) is bound by residues Cys-95, His-98, Cys-117, and His-123. A coiled-coil region spans residues 192-241; the sequence is LAQEEQLQLRRLEEEERATLQRLRDSRNRLAQQNKALKELAEELEERSQR. In terms of domain architecture, B30.2/SPRY spans 271–466; the sequence is DLKTVCRIPG…LPPMTEAAPG (196 aa).

The protein belongs to the TRIM/RBCC family. Expressed in erythroblasts.

It carries out the reaction S-ubiquitinyl-[E2 ubiquitin-conjugating enzyme]-L-cysteine + [acceptor protein]-L-lysine = [E2 ubiquitin-conjugating enzyme]-L-cysteine + N(6)-ubiquitinyl-[acceptor protein]-L-lysine.. It functions in the pathway protein modification; protein ubiquitination. Functionally, E3 ubiquitin ligase induced during late erythropoiesis. Directly binds and ubiquitinates the intermediate chain of the microtubule motor dynein (DYNC1LI1/DYNC1LI2), stimulating the degradation of the dynein holoprotein complex. May participate in the erythroblast enucleation process through regulation of nuclear polarization. The sequence is that of E3 ubiquitin-protein ligase TRIM58 (Trim58) from Mus musculus (Mouse).